The chain runs to 465 residues: MKAAVRSKKSKGSFCHPPLLLLIVAIQFLVIYSPTLDQYMVMLTTGKPGFPSMLIDGRRSFKQVDEFIPEPHLRCDFRDNRSDVCEMEGAIRILGRTSEVFLVAPSLASISGGGGGVNATGVDANATRWKIQPYTRKGESRVMPGITEVTVRLVTADEAPPCDEWHDVPAIVYSNGGYCGNYYHDFNDNIIPLFITSRHLAGEVQLLVTQKQRWWFGKYREIVEGLTKYEPVDLDAEQRVRCYRRATVGLHSHKDLSIDPRRAPNNYSMVDFKRFLMWRYALPREHAIRMEEEDKSKKPRLLVINRRSRRRFVNLDEIVAAAEGVGFEVAAAELDAHIPAAASAVNSYDAMVAVHGSGLTNLVFLPMNAVVIQVVPLGRMEGLAMDEYGVPPRDMNMRYLQYNITAEESTLSEVYPRAHPVFLDPLPIHKQSWSLVKDIYLGQQDVRLDVRRFRPVLLKALHLLR.

At 1-11 (MKAAVRSKKSK) the chain is on the cytoplasmic side. The chain crosses the membrane as a helical; Signal-anchor for type II membrane protein span at residues 12–32 (GSFCHPPLLLLIVAIQFLVIY). The Lumenal segment spans residues 33 to 465 (SPTLDQYMVM…VLLKALHLLR (433 aa)). N-linked (GlcNAc...) asparagine glycosylation is found at Asn-80, Asn-118, Asn-125, Asn-266, and Asn-403.

The protein belongs to the glycosyltransferase 61 family. Widely expressed.

It localises to the golgi apparatus membrane. Its pathway is glycan metabolism. Functionally, glycosyltransferase involved in the xylosylation of xylan, the major hemicellulose (non-cellulosic component) of primary and secondary walls of angiosperms. Possesses beta-1,2-xylosyltransferase activity, transferring xylose from UDP-xylose to the xylan backbone. Catalyzes the addition of 2-O-xylosyl side chains to the xylan backbone. This is Beta-1,2-xylosyltransferase XYXT1 from Oryza sativa subsp. japonica (Rice).